A 295-amino-acid polypeptide reads, in one-letter code: SPX domain-containing protein 1 (295 aa).

Residues 1-166 (MKFGKSLSSQ…GALIRLPFIQ (166 aa)) form the SPX domain. Residues 199–227 (LSVSSEDGRGDSTNEDKPSNPSSSLVNGG) are disordered. Residues 204–216 (EDGRGDSTNEDKP) are compositionally biased toward basic and acidic residues.

Interacts (via SPX domain) with PHR2 (via C-terminus). Interacts with RLI1 in the nucleus to prevents its positive regulation of leaf inclination during phosphate (Pi) starvation. As to expression, predominantly expressed in roots and leaves. Localized in leaves lamina joints.

It localises to the nucleus. In terms of biological role, involved in plant adaptation to phosphate (Pi) starvation. Inhibits PHR2 DNA-binding activity via a Pi-dependent protein interaction. Suppresses the regulation on expression of PT2 by PHR2 and accumulation of shoot Pi. Optimizes growth under phosphate-limited conditions through a negative feedback loop of the PSI (phosphate starvation-induced) signaling pathway. Regulates the expression of SPX2, SPX3 and SPX5. May be an important link between signal transduction pathways related to phosphate starvation and cold stress. Together with SPX2, plays a negative role in the regulation of leaf inclination by preventing RLI1 transcription factor activity in Pi depleted conditions. This is SPX domain-containing protein 1 from Oryza sativa subsp. japonica (Rice).